The chain runs to 158 residues: Single-stranded DNA-binding protein 2 (158 aa).

The SSB domain occupies 1 to 107 (MNETIVCVVG…IDALAVGHDL (107 aa)). Positions 109–158 (RGTSAFRRPSAKDGEAGVSPAARPEPNWETEPGSQPSVEHQPQPEPAGVT) are disordered.

In terms of assembly, homotetramer.

This chain is Single-stranded DNA-binding protein 2 (ssb2), found in Streptomyces avermitilis (strain ATCC 31267 / DSM 46492 / JCM 5070 / NBRC 14893 / NCIMB 12804 / NRRL 8165 / MA-4680).